The primary structure comprises 123 residues: Probable cytochrome c 2.2 (123 aa).

Positions 1 to 21 (MGKKKSDTASGGAIPEGDNEK) are disordered. Residues cysteine 30, cysteine 33, histidine 34, and methionine 95 each contribute to the heme c site.

The protein belongs to the cytochrome c family. Post-translationally, binds 1 heme c group covalently per subunit.

It is found in the mitochondrion intermembrane space. Functionally, electron carrier protein. The oxidized form of the cytochrome c heme group can accept an electron from the heme group of the cytochrome c1 subunit of cytochrome reductase. Cytochrome c then transfers this electron to the cytochrome oxidase complex, the final protein carrier in the mitochondrial electron-transport chain. In Caenorhabditis elegans, this protein is Probable cytochrome c 2.2 (cyc-2.2).